The following is a 207-amino-acid chain: Uracil phosphoribosyltransferase (207 aa).

5-phospho-alpha-D-ribose 1-diphosphate is bound by residues R77, R102, and 129 to 137 (DPMLATGGS). Residues I192 and 197–199 (GDA) contribute to the uracil site. Residue D198 participates in 5-phospho-alpha-D-ribose 1-diphosphate binding.

It belongs to the UPRTase family. Requires Mg(2+) as cofactor.

The catalysed reaction is UMP + diphosphate = 5-phospho-alpha-D-ribose 1-diphosphate + uracil. Its pathway is pyrimidine metabolism; UMP biosynthesis via salvage pathway; UMP from uracil: step 1/1. Its activity is regulated as follows. Allosterically activated by GTP. In terms of biological role, catalyzes the conversion of uracil and 5-phospho-alpha-D-ribose 1-diphosphate (PRPP) to UMP and diphosphate. The protein is Uracil phosphoribosyltransferase of Nocardia farcinica (strain IFM 10152).